Consider the following 164-residue polypeptide: Low molecular weight phosphotyrosine protein phosphatase 2 (164 aa).

C14 serves as the catalytic Nucleophile. Residue R20 is part of the active site. D130 serves as the catalytic Proton donor.

The protein belongs to the low molecular weight phosphotyrosine protein phosphatase family. Cone cells and primary pigment cells in developing pupal retina.

It localises to the cytoplasm. It catalyses the reaction O-phospho-L-tyrosyl-[protein] + H2O = L-tyrosyl-[protein] + phosphate. It carries out the reaction a phosphate monoester + H2O = an alcohol + phosphate. In terms of biological role, catalyzes the dephosphorylation of tyrosine phosphorylated proteins and low-MW aryl phosphates. Can contribute to the regulation of a variety of developmental processes. This chain is Low molecular weight phosphotyrosine protein phosphatase 2 (primo-2), found in Drosophila melanogaster (Fruit fly).